The primary structure comprises 304 residues: tRNA pseudouridine synthase B (304 aa).

Asp-40 serves as the catalytic Nucleophile.

Belongs to the pseudouridine synthase TruB family. Type 1 subfamily.

It carries out the reaction uridine(55) in tRNA = pseudouridine(55) in tRNA. Its function is as follows. Responsible for synthesis of pseudouridine from uracil-55 in the psi GC loop of transfer RNAs. The chain is tRNA pseudouridine synthase B from Halalkalibacterium halodurans (strain ATCC BAA-125 / DSM 18197 / FERM 7344 / JCM 9153 / C-125) (Bacillus halodurans).